Reading from the N-terminus, the 96-residue chain is Small ribosomal subunit protein bS21 (96 aa).

A disordered region spans residues arginine 52–alanine 96. A compositionally biased stretch (low complexity) spans alanine 69–alanine 96.

The protein belongs to the bacterial ribosomal protein bS21 family.

The chain is Small ribosomal subunit protein bS21 from Methylobacterium nodulans (strain LMG 21967 / CNCM I-2342 / ORS 2060).